Consider the following 127-residue polypeptide: Large ribosomal subunit protein bL12 (127 aa).

The protein belongs to the bacterial ribosomal protein bL12 family. In terms of assembly, homodimer. Part of the ribosomal stalk of the 50S ribosomal subunit. Forms a multimeric L10(L12)X complex, where L10 forms an elongated spine to which 2 to 4 L12 dimers bind in a sequential fashion. Binds GTP-bound translation factors.

In terms of biological role, forms part of the ribosomal stalk which helps the ribosome interact with GTP-bound translation factors. Is thus essential for accurate translation. This Phytoplasma mali (strain AT) protein is Large ribosomal subunit protein bL12.